Reading from the N-terminus, the 394-residue chain is NADH dehydrogenase [ubiquinone] iron-sulfur protein 2 (394 aa).

A compositionally biased stretch (polar residues) spans 1–16 (MTTKNRQIKNFTSNFG). Positions 1-22 (MTTKNRQIKNFTSNFGPQHPAA) are disordered.

This sequence belongs to the complex I 49 kDa subunit family. Complex I is composed of about 45 different subunits. This is a component of the iron-sulfur (IP) fragment of the enzyme.

The protein localises to the mitochondrion. The catalysed reaction is a ubiquinone + NADH + 5 H(+)(in) = a ubiquinol + NAD(+) + 4 H(+)(out). Its function is as follows. Core subunit of the mitochondrial membrane respiratory chain NADH dehydrogenase (Complex I) that is believed to belong to the minimal assembly required for catalysis. Complex I functions in the transfer of electrons from NADH to the respiratory chain. The immediate electron acceptor for the enzyme is believed to be ubiquinone. Component of the iron-sulfur (IP) fragment of the enzyme. The protein is NADH dehydrogenase [ubiquinone] iron-sulfur protein 2 (NAD7) of Nicotiana sylvestris (Wood tobacco).